The chain runs to 317 residues: Large ribosomal subunit protein uL10 (317 aa).

The segment at 286–317 is disordered; that stretch reads AGAGAAAEKKEEAKKEESESEEDDDMGFGLFD. Basic and acidic residues predominate over residues 292-302; the sequence is AEKKEEAKKEE.

Belongs to the universal ribosomal protein uL10 family. P0 forms a pentameric complex by interaction with dimers of P1 and P2. In terms of processing, phosphorylated.

Ribosomal protein P0 is the functional equivalent of E.coli protein L10. The polypeptide is Large ribosomal subunit protein uL10 (RpLP0) (Ceratitis capitata (Mediterranean fruit fly)).